Here is a 158-residue protein sequence, read N- to C-terminus: Inner membrane assembly complex subunit 17 (158 aa).

A mitochondrion-targeting transit peptide spans 1-15 (MFRPLVKRVVTRRFL). Residues 16–85 (AAANNSNAHI…KTQETSLKKF (70 aa)) lie on the Mitochondrial matrix side of the membrane. A helical membrane pass occupies residues 86 to 108 (VRPAWIFLLMGSIVYLSCHYVWW). Over 109–158 (KLDYEEKELEYTHKVHQLESELAALNEAHNSSVSSDKNSKRSSRKWYKFW) the chain is Mitochondrial intermembrane. Residues 110–140 (LDYEEKELEYTHKVHQLESELAALNEAHNSS) adopt a coiled-coil conformation.

Belongs to the INA17 family. In terms of assembly, component of the inner membrane assembly (INA) complex, composed of INA17 and INA22. Interacts with a subset of F(1)F(0)-ATP synthase subunits of the F(1)-domain and the peripheral stalk.

The protein resides in the mitochondrion inner membrane. In terms of biological role, component of the INA complex (INAC) that promotes the biogenesis of mitochondrial F(1)F(0)-ATP synthase. INAC facilitates the assembly of the peripheral stalk and promotes the assembly of the catalytic F(1)-domain with the membrane-embedded F(0)-domain. This chain is Inner membrane assembly complex subunit 17, found in Kluyveromyces lactis (strain ATCC 8585 / CBS 2359 / DSM 70799 / NBRC 1267 / NRRL Y-1140 / WM37) (Yeast).